Here is a 327-residue protein sequence, read N- to C-terminus: Urease accessory protein 4 (327 aa).

A glycan (N-linked (GlcNAc...) asparagine) is linked at asparagine 120. A helical transmembrane segment spans residues 239 to 259; the sequence is VYATVLIIGPHLTTLFSYLAY.

Belongs to the UreD family. In terms of assembly, URE4, URE6 and URE7 may form a complex that acts as a GTP-hydrolysis-dependent molecular chaperone, activating the urease apoprotein URE1.

The protein resides in the membrane. Urease accessory protein required for the maturation and activation of urease via the functional incorporation of the urease nickel metallocenter. Plays a role in host brain invasion. This chain is Urease accessory protein 4, found in Cryptococcus neoformans var. grubii serotype A (strain H99 / ATCC 208821 / CBS 10515 / FGSC 9487) (Filobasidiella neoformans var. grubii).